We begin with the raw amino-acid sequence, 1074 residues long: Phospholipase D1 (1074 aa).

A PX domain is found at 81–212; that stretch reads IKAQVLEVER…TEFLDISQLS (132 aa). The PH domain maps to 219-328; sequence PKGIEGMIMK…WGGAIEEFIQ (110 aa). S-palmitoyl cysteine attachment occurs at residues cysteine 240 and cysteine 241. Residues 459-486 form the PLD phosphodiesterase 1 domain; that stretch reads YLWAHHEKLVIIDQSVAFVGGIDLAYGR. The interval 463–928 is catalytic; the sequence is HHEKLVIIDQ…MLGKRDSEMA (466 aa). Serine 499, serine 561, and serine 629 each carry phosphoserine. A PLD phosphodiesterase 2 domain is found at 891–918; that stretch reads ELIYVHSKLLIADDNTVIIGSANINDRS.

The protein belongs to the phospholipase D family. In terms of assembly, interacts with PIP5K1B. In terms of tissue distribution, expressed abundantly in the pancreas and heart and at high levels in brain, placenta, spleen, uterus and small intestine.

The protein resides in the cytoplasm. It is found in the perinuclear region. It localises to the endoplasmic reticulum membrane. Its subcellular location is the golgi apparatus membrane. The protein localises to the late endosome membrane. The enzyme catalyses a 1,2-diacyl-sn-glycero-3-phosphocholine + H2O = a 1,2-diacyl-sn-glycero-3-phosphate + choline + H(+). It carries out the reaction ethanol + a 1,2-diacyl-sn-glycero-3-phosphocholine = 1,2-diacyl-sn-glycero-3-phosphoethanol + choline. The catalysed reaction is 1,2-dihexadecanoyl-sn-glycero-3-phosphocholine + H2O = 1,2-dihexadecanoyl-sn-glycero-3-phosphate + choline + H(+). Stimulated by phosphatidylinositol 4,5-bisphosphate and phosphatidylinositol 3,4,5-trisphosphate, activated by the phosphokinase C-alpha, by the ADP-ribosylation factor-1 (ARF-1), and to a lesser extent by GTP-binding proteins: RHO A, RAC-1 and CDC42. Inhibited by oleate. Functionally, function as phospholipase selective for phosphatidylcholine. Implicated as a critical step in numerous cellular pathways, including signal transduction, membrane trafficking, and the regulation of mitosis. May be involved in the regulation of perinuclear intravesicular membrane traffic. The sequence is that of Phospholipase D1 from Homo sapiens (Human).